A 648-amino-acid polypeptide reads, in one-letter code: Biosynthetic arginine decarboxylase (648 aa).

At Lys109 the chain carries N6-(pyridoxal phosphate)lysine. 291 to 301 (IDVGGGLGIDF) is a substrate binding site.

It belongs to the Orn/Lys/Arg decarboxylase class-II family. SpeA subfamily. Mg(2+) serves as cofactor. The cofactor is pyridoxal 5'-phosphate.

It catalyses the reaction L-arginine + H(+) = agmatine + CO2. It functions in the pathway amine and polyamine biosynthesis; agmatine biosynthesis; agmatine from L-arginine: step 1/1. Catalyzes the biosynthesis of agmatine from arginine. This chain is Biosynthetic arginine decarboxylase, found in Prochlorococcus marinus (strain MIT 9312).